The chain runs to 645 residues: Octopamine receptor Oamb (645 aa).

At 1 to 25 (MNETECEDLIKSVKWTEPANLISLA) the chain is on the extracellular side. Asparagine 2 carries an N-linked (GlcNAc...) asparagine glycan. The chain crosses the membrane as a helical span at residues 26 to 46 (VLEFINVLVIGGNCLVIAAVF). Over 47–56 (CSNKLRSVTN) the chain is Cytoplasmic. A helical transmembrane segment spans residues 57–77 (FFIVNLAVADLLVGLAVLPFS). The Extracellular portion of the chain corresponds to 78–94 (ATWEVFKVWIFGDLWCR). Cysteine 93 and cysteine 287 are joined by a disulfide. The chain crosses the membrane as a helical span at residues 95–115 (IWLAVDVWMCTASILNLCAIS). Over 116 to 138 (LDRYVAVTRPVTYPSIMSTKKAK) the chain is Cytoplasmic. The chain crosses the membrane as a helical span at residues 139–159 (SLIAGIWVLSFFICFPPLVGW). At 160 to 295 (KDQKAVIQPT…KCELTNDRGY (136 aa)) the chain is on the extracellular side. N-linked (GlcNAc...) asparagine glycosylation occurs at asparagine 174. Residues 190–212 (QLGLDSIKDQGEASLPPSPPHIG) are disordered. The helical transmembrane segment at 296–316 (VLYSALGSFYIPMFVMLFFYW) threads the bilayer. Residues 317-520 (RIYRAAVRTT…FRMETKAAKT (204 aa)) are Cytoplasmic-facing. Disordered stretches follow at residues 358–386 (GRGS…PSPE) and 479–500 (RQSN…KKMG). A compositionally biased stretch (low complexity) spans 369–385 (SNGSTQSTTTTLGTPSP). The chain crosses the membrane as a helical span at residues 521-541 (LAIIVGMFIFCWCPFFTMYII). Topologically, residues 542–551 (RPFCQDCVDP) are extracellular. A helical membrane pass occupies residues 552–572 (LLFSVLFWLGYCNSAVNPMIY). Residues 573-645 (ALFSKDFRFA…HHSEMSNDPR (73 aa)) are Cytoplasmic-facing. A disordered region spans residues 621-645 (TPSAAAHSFGDESELHHSEMSNDPR). The span at 629–645 (FGDESELHHSEMSNDPR) shows a compositional bias: basic and acidic residues.

The protein belongs to the G-protein coupled receptor 1 family. As to expression, highly enriched in mushroom body neuropil and in the ellipsoid body (at protein level). Expressed in oviduct epithelium (at protein level). Expressed in the adult and larval brain, thoracic and abdominal ganglia, terminal cells of the larval tracheal system, muscle, mature eggs and reproductive system.

The protein resides in the cell membrane. Receptor for octopamine (OA) which is a neurotransmitter, neurohormone and neuromodulator in invertebrates. Stimulates intracellular accumulation of cAMP and Ca(2+) following ligand binding. Required for ovulation. Following activation on mature follicle cells by OA, induces activity of the metalloprotease Mmp2 which leads to breakdown of the posterior follicle wall, resulting in ovulation. Ligand binding probably also leads to activation of CamKII which is also required for ovulation. Modulates sleep/wake behavior by acting in neurons of the pars intercerebralis to promote wakefulness. Plays a role in courtship conditioning where the courtship behavior of males rejected by already mated females is inhibited with further females. Required in the mushroom body for appetitive olfactory learning. Specifically conveys the short-term reinforcing effects of sweet taste. In insulin-producing cells of the brain, plays a role in inhibiting transcription of insulin-like peptide Ilp3. Also plays a role in social behavior by modulating male agression. This chain is Octopamine receptor Oamb, found in Drosophila melanogaster (Fruit fly).